Reading from the N-terminus, the 281-residue chain is uncharacterized protein (281 aa).

3 helical membrane passes run 23 to 45 (LLLS…FFAA), 65 to 87 (IANF…ASLG), and 94 to 116 (TSVI…GSLS).

Belongs to the MscS (TC 1.A.23) family.

The protein resides in the cell membrane. This is an uncharacterized protein from Buchnera aphidicola subsp. Baizongia pistaciae (strain Bp).